Consider the following 993-residue polypeptide: UPF0182 protein MAP_3291c (993 aa).

7 consecutive transmembrane segments (helical) span residues 18–38 (ILIL…RLID), 63–83 (FVVF…GLAV), 113–133 (LVSV…AQSY), 175–195 (FVAV…FGGI), 210–230 (IQLV…YWLD), 254–274 (AVLP…AAVF), and 287–307 (IGLV…PLIV). The disordered stretch occupies residues 903-941 (NIQPTEGGAPAASPPANAPAPAVTPGSAPPVAAPPVPDG). A compositionally biased stretch (pro residues) spans 929–939 (SAPPVAAPPVP).

It belongs to the UPF0182 family.

The protein resides in the cell membrane. The sequence is that of UPF0182 protein MAP_3291c from Mycolicibacterium paratuberculosis (strain ATCC BAA-968 / K-10) (Mycobacterium paratuberculosis).